Here is a 197-residue protein sequence, read N- to C-terminus: Probable nicotinate-nucleotide adenylyltransferase (197 aa).

This sequence belongs to the NadD family.

It carries out the reaction nicotinate beta-D-ribonucleotide + ATP + H(+) = deamido-NAD(+) + diphosphate. Its pathway is cofactor biosynthesis; NAD(+) biosynthesis; deamido-NAD(+) from nicotinate D-ribonucleotide: step 1/1. Its function is as follows. Catalyzes the reversible adenylation of nicotinate mononucleotide (NaMN) to nicotinic acid adenine dinucleotide (NaAD). This is Probable nicotinate-nucleotide adenylyltransferase from Chlorobium phaeobacteroides (strain DSM 266 / SMG 266 / 2430).